A 672-amino-acid chain; its full sequence is Beta-galactosidase GanA (672 aa).

R105 provides a ligand contact to substrate. C109 is a binding site for Zn(2+). Residue N143 participates in substrate binding. The active-site Proton donor is E144. C149, C151, and C154 together coordinate Zn(2+). E308 functions as the Nucleophile in the catalytic mechanism. Residues W316 and 356–359 (EKLH) contribute to the substrate site.

Belongs to the glycosyl hydrolase 42 family. Homotrimer.

The enzyme catalyses Hydrolysis of terminal non-reducing beta-D-galactose residues in beta-D-galactosides.. Its activity is regulated as follows. Inhibited by zinc, cobalt and copper ions. Its function is as follows. Involved in galactan degradation. Hydrolyzes galactooligosaccharides released by the endo-beta-1,4-galactanase GanB from galactan. Degrades galactotetraose, galactotriose and galactobiose, generating galactose as the end product. It is unable to use lactose. In vitro, shows maximal activity with o-nitrophenyl-beta-D-galactopyranoside (ONPG) and p-nitrophenyl-beta-D-galactopyranoside (PNPG) as substrates, trace activity with p-nitrophenyl-alpha-L-arabinopyranoside and o-nitrophenyl-beta-D-fucopyranoside as substrates, but no activity with p-nitrophenyl-alpha-D-galactopyranoside, p-nitrophenyl-beta-D-glucopyranoside, o-nitrophenyl-beta-D-xylopyranoside, p-nitrophenyl-beta-D-mannopyranoside or p-nitrophenyl-alpha-L-arabinofuranoside as substrates. The sequence is that of Beta-galactosidase GanA from Bacillus subtilis (strain 168).